A 431-amino-acid chain; its full sequence is Trigger factor (431 aa).

A PPIase FKBP-type domain is found at 160-245; it reads EDRVTIDFSG…LKKVEVMVLP (86 aa).

This sequence belongs to the FKBP-type PPIase family. Tig subfamily.

The protein resides in the cytoplasm. The catalysed reaction is [protein]-peptidylproline (omega=180) = [protein]-peptidylproline (omega=0). In terms of biological role, involved in protein export. Acts as a chaperone by maintaining the newly synthesized protein in an open conformation. Functions as a peptidyl-prolyl cis-trans isomerase. The chain is Trigger factor from Actinobacillus succinogenes (strain ATCC 55618 / DSM 22257 / CCUG 43843 / 130Z).